Consider the following 384-residue polypeptide: Galactokinase (384 aa).

34–37 (EHTD) provides a ligand contact to substrate. Residue 123–129 (SSGLSSS) coordinates ATP. The Mg(2+) site is built by Ser129 and Glu161. The active-site Proton acceptor is the Asp173. Tyr222 is a substrate binding site.

Belongs to the GHMP kinase family. GalK subfamily.

It is found in the cytoplasm. The enzyme catalyses alpha-D-galactose + ATP = alpha-D-galactose 1-phosphate + ADP + H(+). It functions in the pathway carbohydrate metabolism; galactose metabolism. Functionally, catalyzes the transfer of the gamma-phosphate of ATP to D-galactose to form alpha-D-galactose-1-phosphate (Gal-1-P). This Glaesserella parasuis serovar 5 (strain SH0165) (Haemophilus parasuis) protein is Galactokinase.